We begin with the raw amino-acid sequence, 243 residues long: Adenylate kinase 4 (243 aa).

Residue 40 to 45 (GSGKGT) coordinates ATP. Residues 60-89 (ATGDMLRAAVAAKTPLGVKAKEAMDKGELV) form an NMP region. AMP is bound by residues threonine 61, arginine 66, 87–89 (ELV), 115–118 (GFPR), and glutamine 122. An LID region spans residues 156 to 193 (GRWIHPSSGRSYHTKFAPPKVPGVDDVTGEPLIQRKDD). ATP is bound at residue arginine 157. AMP-binding residues include arginine 190 and arginine 201.

This sequence belongs to the adenylate kinase family.

The protein resides in the cytoplasm. It carries out the reaction AMP + ATP = 2 ADP. Catalyzes the reversible transfer of the terminal phosphate group between ATP and AMP. Plays an important role in cellular energy homeostasis and in adenine nucleotide metabolism. The polypeptide is Adenylate kinase 4 (ADK-B) (Oryza sativa subsp. japonica (Rice)).